The chain runs to 259 residues: Probable ABC transporter permease protein RBE_1340 (259 aa).

5 helical membrane passes run 25–45 (IFSL…SLII), 49–69 (LFIG…SGAV), 148–168 (VIAA…IGVM), 195–215 (PIDV…ISII), and 237–257 (AVVN…ELFF).

Belongs to the MlaE permease family.

Its subcellular location is the cell inner membrane. In terms of biological role, could be part of an ABC transporter complex. The sequence is that of Probable ABC transporter permease protein RBE_1340 from Rickettsia bellii (strain RML369-C).